Consider the following 230-residue polypeptide: Orotidine 5'-phosphate decarboxylase (230 aa).

Substrate is bound by residues D11, K34, 61 to 70, T117, R179, Q188, G208, and R209; that span reads DLKLHDIPNT. Residue K63 is the Proton donor of the active site.

The protein belongs to the OMP decarboxylase family. Type 1 subfamily. As to quaternary structure, homodimer.

The enzyme catalyses orotidine 5'-phosphate + H(+) = UMP + CO2. It participates in pyrimidine metabolism; UMP biosynthesis via de novo pathway; UMP from orotate: step 2/2. Its function is as follows. Catalyzes the decarboxylation of orotidine 5'-monophosphate (OMP) to uridine 5'-monophosphate (UMP). This is Orotidine 5'-phosphate decarboxylase from Streptococcus pyogenes serotype M49 (strain NZ131).